An 82-amino-acid polypeptide reads, in one-letter code: Small ribosomal subunit protein uS17 (82 aa).

The protein belongs to the universal ribosomal protein uS17 family. Part of the 30S ribosomal subunit.

Its function is as follows. One of the primary rRNA binding proteins, it binds specifically to the 5'-end of 16S ribosomal RNA. The sequence is that of Small ribosomal subunit protein uS17 from Tolumonas auensis (strain DSM 9187 / NBRC 110442 / TA 4).